The chain runs to 474 residues: UDP-N-acetylmuramate--L-alanine ligase (474 aa).

Residue 115–121 coordinates ATP; that stretch reads GTHGKTT.

The protein belongs to the MurCDEF family.

It is found in the cytoplasm. The enzyme catalyses UDP-N-acetyl-alpha-D-muramate + L-alanine + ATP = UDP-N-acetyl-alpha-D-muramoyl-L-alanine + ADP + phosphate + H(+). The protein operates within cell wall biogenesis; peptidoglycan biosynthesis. In terms of biological role, cell wall formation. The chain is UDP-N-acetylmuramate--L-alanine ligase from Novosphingobium aromaticivorans (strain ATCC 700278 / DSM 12444 / CCUG 56034 / CIP 105152 / NBRC 16084 / F199).